We begin with the raw amino-acid sequence, 199 residues long: Cytochrome c oxidase subunit 2 (199 aa).

The helical transmembrane segment at 1 to 13 threads the bilayer; sequence AICSLVLYLLTLM. Topologically, residues 14–26 are mitochondrial matrix; that stretch reads LMEKLSSNSVDAQ. Residues 27 to 54 form a helical membrane-spanning segment; the sequence is EVELVWTILPAIVLILLALPSLQILYMM. Over 55–199 the chain is Mitochondrial intermembrane; it reads DEIDEPDLTL…SSLLSTSSSL (145 aa). Residues His128, Cys163, Glu165, Cys167, His171, and Met174 each contribute to the Cu cation site. Glu165 contributes to the Mg(2+) binding site.

It belongs to the cytochrome c oxidase subunit 2 family. As to quaternary structure, component of the cytochrome c oxidase (complex IV, CIV), a multisubunit enzyme composed of 14 subunits. The complex is composed of a catalytic core of 3 subunits MT-CO1, MT-CO2 and MT-CO3, encoded in the mitochondrial DNA, and 11 supernumerary subunits COX4I, COX5A, COX5B, COX6A, COX6B, COX6C, COX7A, COX7B, COX7C, COX8 and NDUFA4, which are encoded in the nuclear genome. The complex exists as a monomer or a dimer and forms supercomplexes (SCs) in the inner mitochondrial membrane with NADH-ubiquinone oxidoreductase (complex I, CI) and ubiquinol-cytochrome c oxidoreductase (cytochrome b-c1 complex, complex III, CIII), resulting in different assemblies (supercomplex SCI(1)III(2)IV(1) and megacomplex MCI(2)III(2)IV(2)). Found in a complex with TMEM177, COA6, COX18, COX20, SCO1 and SCO2. Interacts with TMEM177 in a COX20-dependent manner. Interacts with COX20. Interacts with COX16. The cofactor is Cu cation.

The protein resides in the mitochondrion inner membrane. The catalysed reaction is 4 Fe(II)-[cytochrome c] + O2 + 8 H(+)(in) = 4 Fe(III)-[cytochrome c] + 2 H2O + 4 H(+)(out). Its function is as follows. Component of the cytochrome c oxidase, the last enzyme in the mitochondrial electron transport chain which drives oxidative phosphorylation. The respiratory chain contains 3 multisubunit complexes succinate dehydrogenase (complex II, CII), ubiquinol-cytochrome c oxidoreductase (cytochrome b-c1 complex, complex III, CIII) and cytochrome c oxidase (complex IV, CIV), that cooperate to transfer electrons derived from NADH and succinate to molecular oxygen, creating an electrochemical gradient over the inner membrane that drives transmembrane transport and the ATP synthase. Cytochrome c oxidase is the component of the respiratory chain that catalyzes the reduction of oxygen to water. Electrons originating from reduced cytochrome c in the intermembrane space (IMS) are transferred via the dinuclear copper A center (CU(A)) of subunit 2 and heme A of subunit 1 to the active site in subunit 1, a binuclear center (BNC) formed by heme A3 and copper B (CU(B)). The BNC reduces molecular oxygen to 2 water molecules using 4 electrons from cytochrome c in the IMS and 4 protons from the mitochondrial matrix. This Apteryx australis (Southern brown kiwi) protein is Cytochrome c oxidase subunit 2 (MT-CO2).